Consider the following 272-residue polypeptide: Putative phosphoenolpyruvate synthase regulatory protein (272 aa).

152–159 is a binding site for ADP; it reads GVSRCGKT.

Belongs to the pyruvate, phosphate/water dikinase regulatory protein family. PSRP subfamily.

The enzyme catalyses [pyruvate, water dikinase] + ADP = [pyruvate, water dikinase]-phosphate + AMP + H(+). The catalysed reaction is [pyruvate, water dikinase]-phosphate + phosphate + H(+) = [pyruvate, water dikinase] + diphosphate. Its function is as follows. Bifunctional serine/threonine kinase and phosphorylase involved in the regulation of the phosphoenolpyruvate synthase (PEPS) by catalyzing its phosphorylation/dephosphorylation. This Pseudomonas putida (strain ATCC 700007 / DSM 6899 / JCM 31910 / BCRC 17059 / LMG 24140 / F1) protein is Putative phosphoenolpyruvate synthase regulatory protein.